A 27-amino-acid polypeptide reads, in one-letter code: GLFLDTLKGLAGKLLQGLKCIKAGCKP.

Residues Cys-20 and Cys-25 are joined by a disulfide bond.

In terms of tissue distribution, expressed by the skin glands.

The protein resides in the secreted. Antibacterial activity against Gram-positive bacterium S.aureus (MIC=40 uM) and Gram-negative bacterium E.coli (MIC=2 uM). Has activity against C.albicans (MIC=46 uM). This is Ranatuerin-2Cb from Lithobates clamitans (Green frog).